A 65-amino-acid chain; its full sequence is SPbeta prophage-derived uncharacterized protein YorO (65 aa).

The polypeptide is SPbeta prophage-derived uncharacterized protein YorO (yorO) (Bacillus subtilis (strain 168)).